The following is a 160-amino-acid chain: Endoribonuclease YbeY (160 aa).

Zn(2+) is bound by residues His112, His116, and His122. Residues 141 to 160 are disordered; sequence ELGHPDPYACDDEEPPSKEK.

It belongs to the endoribonuclease YbeY family. Zn(2+) serves as cofactor.

Its subcellular location is the cytoplasm. In terms of biological role, single strand-specific metallo-endoribonuclease involved in late-stage 70S ribosome quality control and in maturation of the 3' terminus of the 16S rRNA. In Pseudomonas paraeruginosa (strain DSM 24068 / PA7) (Pseudomonas aeruginosa (strain PA7)), this protein is Endoribonuclease YbeY.